The following is a 272-amino-acid chain: Undecaprenyl-diphosphatase (272 aa).

8 helical membrane-spanning segments follow: residues 5 to 25, 45 to 65, 88 to 108, 114 to 134, 153 to 172, 189 to 209, 221 to 241, and 251 to 271; these read YSLFVAFILGVVEGLTEFLPV, AKTFEVIIQLGSILAVVVVFW, HLTLGHILLAMIPAVILGLAF, ALFDPKSVMYALVAGGVLLLA, YRQAFAIGCFQCLALWPGFS, YAASEFSFILAVPMMIGASGL, GDLPMFAVGFITAFIVALIAI, and ISFVPFAIYRFIVAAVVYWVF.

The protein belongs to the UppP family.

It localises to the cell inner membrane. The catalysed reaction is di-trans,octa-cis-undecaprenyl diphosphate + H2O = di-trans,octa-cis-undecaprenyl phosphate + phosphate + H(+). Catalyzes the dephosphorylation of undecaprenyl diphosphate (UPP). Confers resistance to bacitracin. The sequence is that of Undecaprenyl-diphosphatase from Yersinia pseudotuberculosis serotype IB (strain PB1/+).